A 1820-amino-acid polypeptide reads, in one-letter code: Cation channel sperm-associated targeting subunit tau (1820 aa).

The 136-residue stretch at 87–222 (DSEELEITQE…QKGCFIEEVQ (136 aa)) folds into the C2 domain. 4 disordered regions span residues 360-383 (SEET…ELEN), 403-443 (LLDN…TEVH), 695-722 (EVSM…SSME), and 838-857 (SSTK…SGSS). Over residues 415–443 (PTLNQSDQDNSTADASKNDESTPSPTEVH) the composition is skewed to polar residues.

Component of the CatSper complex or CatSpermasome composed of the core pore-forming members CATSPER1, CATSPER2, CATSPER3 and CATSPER4 as well as auxiliary members CATSPERB, CATSPERG, CATSPERD, CATSPERE, CATSPERZ, C2CD6/CATSPERT, TMEM249, TMEM262 and EFCAB9. HSPA1 may be an additional auxiliary complex member. The core complex members CATSPER1, CATSPER2, CATSPER3 and CATSPER4 form a heterotetrameric channel. The auxiliary CATSPERB, CATSPERG, CATSPERD and CATSPERE subunits form a pavilion-like structure over the pore which stabilizes the complex through interactions with CATSPER4, CATSPER3, CATSPER1 and CATSPER2 respectively. SLCO6C1 interacts with CATSPERE and TMEM262/CATSPERH interacts with CATSPERB, further stabilizing the complex. C2CD6/CATSPERT interacts at least with CATSPERD and is required for targeting the CatSper complex in the flagellar membrane. Expressed in testis (at protein level).

The protein localises to the cell projection. It localises to the cilium. Its subcellular location is the flagellum membrane. In terms of biological role, auxiliary component of the CatSper complex, a complex involved in sperm cell hyperactivation. Sperm cell hyperactivation is needed for sperm motility which is essential late in the preparation of sperm for fertilization. Required for CatSper complex targeting and trafficking into the quadrilinear nanodomains. Targets the preassembled CatSper complexes to elongating flagella, where it links the channel-carrying vesicles and motor proteins. This is Cation channel sperm-associated targeting subunit tau from Homo sapiens (Human).